The following is a 556-amino-acid chain: Formate--tetrahydrofolate ligase (556 aa).

65–72 lines the ATP pocket; sequence TPAGEGKT.

It belongs to the formate--tetrahydrofolate ligase family.

The enzyme catalyses (6S)-5,6,7,8-tetrahydrofolate + formate + ATP = (6R)-10-formyltetrahydrofolate + ADP + phosphate. The protein operates within one-carbon metabolism; tetrahydrofolate interconversion. This Peptoclostridium acidaminophilum (Eubacterium acidaminophilum) protein is Formate--tetrahydrofolate ligase.